The chain runs to 121 residues: Neuromedin-B (121 aa).

The N-terminal stretch at 1–24 (MTLRARGARLLGGLLFFTLLAAGA) is a signal peptide. Met56 bears the Methionine amide mark. Positions 60–121 (SLEPPNPSLL…RRLLVQTLEK (62 aa)) are excised as a propeptide.

It belongs to the bombesin/neuromedin-B/ranatensin family. Higher expression in the central nervous system (CNS) than in peripheral tissues. Highest levels are found in the olfactory bulb. Relatively high levels in the CNS (including the cerebral cortex, cerebellum, spinal cord, medulla oblongata, midbrain, hypothalamus, hippocampus, and hypophysis) and in peripheral tissues such as the pancreas, adrenal gland, testis, ovary and cecum. Moderate levels are found in the rectum, heart and pons with low expression levels detected in the bone marrow and duodenum. Other tissues show no or low levels of expression.

It localises to the secreted. It is found in the cell projection. The protein localises to the neuron projection. Stimulates smooth muscle contraction. Induces sighing by acting directly on the pre-Botzinger complex, a cluster of several thousand neurons in the ventrolateral medulla responsible for inspiration during respiratory activity. Contributes to the induction of sneezing following exposure to chemical irritants or allergens which causes release of NMB by nasal sensory neurons and activation of NMBR-expressing neurons in the sneeze-evoking region of the brainstem. These in turn activate neurons of the caudal ventral respiratory group, giving rise to the sneezing response. Contributes to induction of acute itch, possibly through activation of the NMBR receptor on dorsal root ganglion neurons. Increases expression of NMBR and steroidogenic mediators STAR, CYP11A1 and HSD3B1 in Leydig cells, induces secretion of testosterone by Leydig cells and also promotes Leydig cell proliferation. Plays a role in the innate immune response to influenza A virus infection by enhancing interferon alpha expression and reducing expression of IL6. Plays a role in CSF1-induced proliferation of osteoclast precursors by contributing to positive regulation of the expression of the CSF1 receptor CSF1R. The polypeptide is Neuromedin-B (NMB) (Sus scrofa (Pig)).